Here is an 836-residue protein sequence, read N- to C-terminus: Homeobox-leucine zipper protein ATHB-15 (836 aa).

The segment at residues 14 to 77 (DNGKYVRYTP…NRRCREKQRK (64 aa)) is a DNA-binding region (homeobox). A coiled-coil region spans residues 72–115 (REKQRKEASRLQAVNRKLTAMNKLLMEENDRLQKQVSQLVHENS). The START domain occupies 151–379 (RDASPAGLLS…IAQEVTQTNS (229 aa)).

The protein belongs to the HD-ZIP homeobox family. Class III subfamily. Interacts with ESR1 and ESR2. Interacts with ZPR3. As to expression, highly expressed the developing vascular elements and the adaxial portion of cotyledons. Expressed in developing ovules, stamens and carpels. Expressed in procambium and shoot meristem.

It is found in the nucleus. In terms of biological role, probable transcription factor involved in the regulation of meristem development to promote lateral organ formation. May regulates procambial and vascular tissue formation or maintenance, and vascular development in inflorescence stems. The chain is Homeobox-leucine zipper protein ATHB-15 (ATHB-15) from Arabidopsis thaliana (Mouse-ear cress).